Consider the following 763-residue polypeptide: Translation initiation factor IF-2, chloroplastic (763 aa).

Disordered regions lie at residues 1–22 (MFLN…NNSS), 52–122 (IDKS…SNSA), and 149–168 (NNKI…DQSI). Residues 13–22 (SSYSTNNNSS) show a composition bias toward low complexity. Residues 73–92 (RIDKKNKNFNKAHDLLDNKK) are compositionally biased toward basic and acidic residues. Basic residues predominate over residues 93–104 (NKNRQRKKIKNK). A compositionally biased stretch (polar residues) spans 151-168 (KIPQQKKQQVASSIDQSI). The tr-type G domain maps to 261–429 (NRPPVVTILG…ILLLAELENL (169 aa)). Residues 270–277 (GHVDHGKT), 316–320 (DTPGH), and 370–373 (SKID) each bind GTP.

This sequence belongs to the TRAFAC class translation factor GTPase superfamily. Classic translation factor GTPase family. IF-2 subfamily.

Its subcellular location is the plastid. It localises to the chloroplast. In terms of biological role, one of the essential components for the initiation of protein synthesis. Protects formylmethionyl-tRNA from spontaneous hydrolysis and promotes its binding to the 30S ribosomal subunits. Also involved in the hydrolysis of GTP during the formation of the 70S ribosomal complex. This is Translation initiation factor IF-2, chloroplastic (infB) from Porphyra purpurea (Red seaweed).